Here is a 1345-residue protein sequence, read N- to C-terminus: DNA-directed RNA polymerase subunit beta (1345 aa).

Belongs to the RNA polymerase beta chain family. As to quaternary structure, the RNAP catalytic core consists of 2 alpha, 1 beta, 1 beta' and 1 omega subunit. When a sigma factor is associated with the core the holoenzyme is formed, which can initiate transcription.

It carries out the reaction RNA(n) + a ribonucleoside 5'-triphosphate = RNA(n+1) + diphosphate. Its function is as follows. DNA-dependent RNA polymerase catalyzes the transcription of DNA into RNA using the four ribonucleoside triphosphates as substrates. The chain is DNA-directed RNA polymerase subunit beta from Shewanella sp. (strain MR-4).